Here is a 115-residue protein sequence, read N- to C-terminus: U3-lycotoxin-Ls1k (115 aa).

An N-terminal signal peptide occupies residues 1–20; the sequence is MKFVLLFGVLVVTLFSYSSA. Residues 21 to 44 constitute a propeptide that is removed on maturation; sequence EMLDDFDQADEDELLSLIEKEEAR. Cystine bridges form between Cys-48–Cys-63, Cys-55–Cys-72, Cys-62–Cys-87, and Cys-74–Cys-85.

This sequence belongs to the neurotoxin 19 (CSTX) family. 01 subfamily. Expressed by the venom gland.

The protein resides in the secreted. The protein is U3-lycotoxin-Ls1k of Lycosa singoriensis (Wolf spider).